A 621-amino-acid polypeptide reads, in one-letter code: Probable potassium transport system protein Kup 2 (621 aa).

The next 12 helical transmembrane spans lie at 12–32 (ITVAAIGVVFGDIGTSPLYAL), 52–72 (VLSLVFWAIIVLVTIKYVAII), 101–121 (WIITLLGIFAAALFYGDSMIT), 138–158 (PDLKSYVIPITLGILTGLFFI), 166–186 (VGKLFGPVMVAWFGILAILGL), 213–233 (GLAFLALGSVVLAVTGGEALY), 249–269 (FGFVMPALVLNYFGQGALLLI), 286–306 (ALIPMVGLATAATVIASQAVI), 338–358 (IYVPFTNWSLYLAVIALVIGF), 370–390 (IAVTGTMLIDTILVAFVMVLM), 396–416 (LLVALVAGTLLLVDIAFFAAN), and 420–440 (IPEGGWFPLAMGLVSFTVLTT).

The protein belongs to the HAK/KUP transporter (TC 2.A.72) family.

Its subcellular location is the cell inner membrane. The enzyme catalyses K(+)(in) + H(+)(in) = K(+)(out) + H(+)(out). Its function is as follows. Transport of potassium into the cell. Likely operates as a K(+):H(+) symporter. The chain is Probable potassium transport system protein Kup 2 from Dechloromonas aromatica (strain RCB).